We begin with the raw amino-acid sequence, 188 residues long: uncharacterized protein (188 aa).

This is an uncharacterized protein from Acidianus convivator (ABV).